Reading from the N-terminus, the 196-residue chain is DnaA initiator-associating protein DiaA (196 aa).

The SIS domain occupies 34 to 196 (LVQSLLNGNK…DNTLFPHQAD (163 aa)).

The protein belongs to the SIS family. DiaA subfamily. As to quaternary structure, homotetramer; dimer of dimers.

Its function is as follows. Required for the timely initiation of chromosomal replication via direct interactions with the DnaA initiator protein. The polypeptide is DnaA initiator-associating protein DiaA (Edwardsiella ictaluri (strain 93-146)).